Reading from the N-terminus, the 212-residue chain is Ropporin-1 (212 aa).

Residues 12 to 43 form the RIIa domain; sequence PELPELLKQFTKAAIRTQPPDLIQWAAEYFGA. Position 56 is a phosphoserine (S56). The interval 209–212 is interaction with RHPN1; it reads VRLE.

It belongs to the ropporin family. In terms of assembly, homodimer. Interacts with AKAP3. May interact with SPA17. Interacts with RHPN1. Interacts with FSCB; the interaction increases upon spermatozoa capacitation conditions. Interacts with CFAP61. Sumoylated, sumoylation decreases upon spermatozoa capacitation conditions.

The protein localises to the cell projection. Its subcellular location is the cilium. It is found in the flagellum. Important for male fertility. With ROPN1L, involved in fibrous sheath integrity and sperm motility, plays a role in PKA-dependent signaling processes required for spermatozoa capacitation. The polypeptide is Ropporin-1 (Ropn1) (Rattus norvegicus (Rat)).